The following is a 573-amino-acid chain: Sulfate adenylyltransferase (573 aa).

Residues 1–169 (MANSPHGGVL…IEAVNKLNHY (169 aa)) are N-terminal. The tract at residues 170–394 (DYVALRYTPA…LRESSPPRHT (225 aa)) is catalytic. Glutamine 197 lines the sulfate pocket. ATP-binding positions include 197–200 (QTRN) and 291–294 (GRDH). Residues threonine 198, arginine 199, and asparagine 200 contribute to the active site. Arginine 199 is a binding site for sulfate. Alanine 295 contributes to the sulfate binding site. Residue valine 333 participates in ATP binding. The tract at residues 395–573 (QGFTVFLTGY…LETEGFFDRA (179 aa)) is allosteric regulation domain; adenylyl-sulfate kinase-like. 3'-phosphoadenylyl sulfate contacts are provided by residues 434 to 437 (DTVR), arginine 451, 477 to 478 (IA), and arginine 515.

The protein in the N-terminal section; belongs to the sulfate adenylyltransferase family. It in the C-terminal section; belongs to the APS kinase family. As to quaternary structure, homohexamer. Dimer of trimers.

It localises to the cytoplasm. It catalyses the reaction sulfate + ATP + H(+) = adenosine 5'-phosphosulfate + diphosphate. It functions in the pathway sulfur metabolism; hydrogen sulfide biosynthesis; sulfite from sulfate: step 1/3. With respect to regulation, allosterically inhibited by 3'-phosphoadenosine 5'-phosphosulfate (PAPS). Its function is as follows. Catalyzes the first intracellular reaction of sulfate assimilation, forming adenosine-5'-phosphosulfate (APS) from inorganic sulfate and ATP. Plays an important role in sulfate activation as a component of the biosynthesis pathway of sulfur-containing amino acids. In Aspergillus oryzae (strain ATCC 42149 / RIB 40) (Yellow koji mold), this protein is Sulfate adenylyltransferase.